The sequence spans 641 residues: 1-deoxy-D-xylulose-5-phosphate synthase (641 aa).

Thiamine diphosphate is bound by residues His-79 and 120–122 (AHS). Asp-151 serves as a coordination point for Mg(2+). Residues 152–153 (GA), Asn-180, Tyr-290, and Glu-372 each bind thiamine diphosphate. Asn-180 contributes to the Mg(2+) binding site.

This sequence belongs to the transketolase family. DXPS subfamily. In terms of assembly, homodimer. Mg(2+) is required as a cofactor. It depends on thiamine diphosphate as a cofactor.

The catalysed reaction is D-glyceraldehyde 3-phosphate + pyruvate + H(+) = 1-deoxy-D-xylulose 5-phosphate + CO2. The protein operates within metabolic intermediate biosynthesis; 1-deoxy-D-xylulose 5-phosphate biosynthesis; 1-deoxy-D-xylulose 5-phosphate from D-glyceraldehyde 3-phosphate and pyruvate: step 1/1. Functionally, catalyzes the acyloin condensation reaction between C atoms 2 and 3 of pyruvate and glyceraldehyde 3-phosphate to yield 1-deoxy-D-xylulose-5-phosphate (DXP). This Bradyrhizobium sp. (strain ORS 278) protein is 1-deoxy-D-xylulose-5-phosphate synthase.